The primary structure comprises 425 residues: Queuine tRNA-ribosyltransferase accessory subunit 2 (425 aa).

Residues 302-323 (QNGAQDLEKNSPEEDQEEEVVK) are disordered. Positions 351, 353, 356, and 382 each coordinate Zn(2+).

The protein belongs to the queuine tRNA-ribosyltransferase family. QTRT2 subfamily. In terms of assembly, heterodimer of a catalytic subunit QTRT1 and an accessory subunit QTRT2. It depends on Zn(2+) as a cofactor.

The protein resides in the cytoplasm. It is found in the mitochondrion outer membrane. Functionally, non-catalytic subunit of the queuine tRNA-ribosyltransferase (TGT) that catalyzes the base-exchange of a guanine (G) residue with queuine (Q) at position 34 (anticodon wobble position) in tRNAs with GU(N) anticodons (tRNA-Asp, -Asn, -His and -Tyr), resulting in the hypermodified nucleoside queuosine (7-(((4,5-cis-dihydroxy-2-cyclopenten-1-yl)amino)methyl)-7-deazaguanosine). The chain is Queuine tRNA-ribosyltransferase accessory subunit 2 from Gallus gallus (Chicken).